A 493-amino-acid polypeptide reads, in one-letter code: MIFILLTTLLAVGGAQTANILAVLPTPAYSHHLVYQAYVQALADKCHNVTVVKPQLLDYAAANKQRCGRIEQIDADMSSQQYKKLVASSGAFRKRGVVSDETTVTAENYMGLVEMFRDQFDNAHVRSFLATNRTFDVVVVEAFADYALVFGHLFRPAPVIQIAPGYGLAENFDAVGAVGRHPVHYPNIWRSSSIGNADGALIEWRLYNEFELLARRSDALLKLQFGPNTPTIRQLRNNVQLLLLNLHPVYDNNRPVPPSVQYLGGGLHLTLEPPQRLDIELEKRLNASVNGTVYVSFGSSIDTNSIHAEFLQMLLDTFAKLDNRTVLWKVDDAVAKSVVLPRNVIAQKWFNQRAVLNHRNVVAFVTQGGLQSSDEALHARVPMVCLPMMGDQFHHSAKLEQFGVARALNTVTVSAAQLALAVGDVIADRLAYQLRMTNLLNVVAFDEATPADKAIKFTERVIRFGHDITRSECSLKSPSANTDYSDYFVRFPL.

An N-terminal signal peptide occupies residues 1-17 (MIFILLTTLLAVGGAQT).

This sequence belongs to the UDP-glycosyltransferase family.

Functionally, catalyzes the transfer of glucose from UDP-glucose to ecdysteroids which are insect molting hormones. Expression of egt interferes with normal insect development and block molting. The sequence is that of Ecdysteroid UDP-glucosyltransferase (egt) from Choristoneura fumiferana defective polyhedrosis virus (Cfdef).